A 476-amino-acid polypeptide reads, in one-letter code: Protein transport protein Sec61 subunit alpha isoform 2 (476 aa).

Topologically, residues 1–33 (MGIKFLEVIKPFCAVLPEIQKPERKIQFREKVL) are cytoplasmic. The helical transmembrane segment at 34–53 (WTAITLFIFLVCCQIPLFGI) threads the bilayer. The Lumenal portion of the chain corresponds to 54–76 (MSSDSADPFYWMRVILASNRGTL). A helical membrane pass occupies residues 77–96 (MELGISPIVTSGLIMQLLAG). Topologically, residues 97-117 (AKIIEVGDTPKDRALFNGAQK) are cytoplasmic. The helical transmembrane segment at 118–138 (LFGMIITIGQAIVYVMTGMYG) threads the bilayer. Residues 139-144 (DPAEMG) are Lumenal-facing. Residues 145–165 (AGICLLIIIQLFVAGLIVLLL) form a helical membrane-spanning segment. Topologically, residues 166 to 172 (DELLQKG) are cytoplasmic. The chain crosses the membrane as a helical span at residues 173-193 (YGLGSGISLFIATNICETIVW). Residues 194–240 (KAFSPTTINTGRGTEFEGAVIALFHLLATRTDKVRALREAFYRQNLP) lie on the Lumenal side of the membrane. A helical transmembrane segment spans residues 241–261 (NLMNLIATVFVFAVVIYFQGF). The Cytoplasmic portion of the chain corresponds to 262-288 (RVDLPIKSARYRGQYSSYPIKLFYTSN). A helical transmembrane segment spans residues 289-309 (IPIILQSALVSNLYVISQMLS). Topologically, residues 310-354 (VRFSGNFLVNLLGQWADVSGGGPARSYPVGGLCYYLSPPESMGAI) are lumenal. Residues 355–375 (FEDPVHVVVYIIFMLGSCAFF) traverse the membrane as a helical segment. At 376–420 (SKTWIEVSGSSAKDVAKQLKEQQMVMRGHRDTSMVHELNRYIPTA) the chain is on the cytoplasmic side. A helical transmembrane segment spans residues 421–441 (AAFGGLCIGALSVLADFLGAI). The Lumenal segment spans residues 442-445 (GSGT). The helical transmembrane segment at 446-462 (GILLAVTIIYQYFEIFV) threads the bilayer. The Cytoplasmic portion of the chain corresponds to 463 to 476 (KEQAEVGGMGALFF).

It belongs to the SecY/SEC61-alpha family. In terms of assembly, the SEC61 channel-forming translocon complex consists of channel-forming core components SEC61A1, SEC61B and SEC61G and different auxiliary components such as SEC62 and SEC63.

The protein resides in the endoplasmic reticulum membrane. Functionally, component of SEC61 channel-forming translocon complex that mediates transport of signal peptide-containing precursor polypeptides across the endoplasmic reticulum (ER). Forms a ribosome receptor and a gated pore in the ER membrane, both functions required for cotranslational translocation of nascent polypeptides. This Homo sapiens (Human) protein is Protein transport protein Sec61 subunit alpha isoform 2 (SEC61A2).